The sequence spans 379 residues: Probable 3-phenylpropionic acid transporter (379 aa).

At 1–4 the chain is on the cytoplasmic side; it reads MVLQ. The chain crosses the membrane as a helical span at residues 5-31; sequence STRWLALGYFTYFFSYGIFLPFWSVWL. Residues 32–37 are Periplasmic-facing; it reads KGIGLT. A helical transmembrane segment spans residues 38–66; it reads PETIGLLLGAGLVARFLGSLLIAPRVSDP. Over 67–70 the chain is Cytoplasmic; it reads SRLI. A helical transmembrane segment spans residues 71–96; sequence SALRVLALLTLLFAVAFWAGAHVAWL. Over 97–100 the chain is Periplasmic; that stretch reads MLVM. Residues 101–118 form a helical membrane-spanning segment; it reads IGFNLFFSPLVPLTDALA. Over 119–129 the chain is Cytoplasmic; that stretch reads NTWQKQFPLDY. The chain crosses the membrane as a helical span at residues 130-152; it reads GKVRLWGSVAFVIGSALTGKLVT. The Periplasmic segment spans residues 153-155; sequence MFD. A helical transmembrane segment spans residues 156 to 175; the sequence is YRVILALLTLGVASMLLGFL. At 176 to 207 the chain is on the cytoplasmic side; it reads IRPTIQPQGASRQQESTGWSAWLALVRQNWRF. Residues 208 to 227 form a helical membrane-spanning segment; that stretch reads LACVCLLQGAHAAYYGFSAI. Over 228 to 231 the chain is Periplasmic; that stretch reads YWQA. Residues 232–256 form a helical membrane-spanning segment; that stretch reads AGYSASAVGYLWSLGVVAEVIIFAL. Topologically, residues 257–266 are cytoplasmic; the sequence is SNKLFRRCSA. A helical transmembrane segment spans residues 267-286; it reads RDMLLISAICGVVRWGIMGA. Over 287–289 the chain is Periplasmic; sequence TTA. Residues 290-312 traverse the membrane as a helical segment; the sequence is LPWLIVVQILHCGTFTVCHLAAM. The Cytoplasmic segment spans residues 313-323; it reads RYIAARQGSEV. Residues 324-351 form a helical membrane-spanning segment; the sequence is IRLQAVYSAVAMGGSIAIMTVFAGFLYQ. The Periplasmic portion of the chain corresponds to 352-354; sequence YLG. Residues 355–375 form a helical membrane-spanning segment; sequence HGVFWVMALVALPAMFLRPKV. The Cytoplasmic segment spans residues 376 to 379; that stretch reads VPSC.

This sequence belongs to the major facilitator superfamily. Phenyl propionate permease (PPP) (TC 2.A.1.27) family.

The protein resides in the cell inner membrane. In terms of biological role, probable permease involved in the uptake of 3-phenylpropionic acid. The sequence is that of Probable 3-phenylpropionic acid transporter (hcaT) from Escherichia coli (strain K12).